A 70-amino-acid chain; its full sequence is U2-agatoxin-Ao1n (70 aa).

The signal sequence occupies residues 1 to 20 (MRAIISLLLISAMVFYIIAA). Positions 21–34 (VPEEEGLQLSEDER) are excised as a propeptide. 3 disulfides stabilise this stretch: cysteine 37/cysteine 53, cysteine 44/cysteine 58, and cysteine 52/cysteine 68. Leucine 69 is modified (leucine amide).

This sequence belongs to the neurotoxin 01 (U2-agtx) family. Expressed by the venom gland.

It localises to the secreted. Insect active toxin causing rapid but reversible paralysis in crickets. No activity shown in mammals. Does not show effect on mammalian voltage-gated calcium channels. This chain is U2-agatoxin-Ao1n, found in Agelena orientalis (Funnel-web spider).